Here is a 180-residue protein sequence, read N- to C-terminus: Inner membrane-spanning protein YciB (180 aa).

5 consecutive transmembrane segments (helical) span residues 22 to 42 (IYVA…LTWL), 50 to 70 (MTLI…VFHN), 76 to 96 (WKVT…QVVL), 121 to 141 (AAWA…AFWL), and 149 to 169 (FKVF…GIYI).

This sequence belongs to the YciB family.

The protein localises to the cell inner membrane. Its function is as follows. Plays a role in cell envelope biogenesis, maintenance of cell envelope integrity and membrane homeostasis. The protein is Inner membrane-spanning protein YciB of Edwardsiella ictaluri (strain 93-146).